A 64-amino-acid chain; its full sequence is H/ACA ribonucleoprotein complex subunit 3 (64 aa).

The protein belongs to the NOP10 family. As to quaternary structure, component of the box H/ACA small nucleolar ribonucleoprotein (H/ACA snoRNP) complex consisting of Nop60B, Gar1, NPH2 and Nop10, and associated with H/ACA-type snoRNAs.

The protein resides in the nucleus. It localises to the nucleolus. Its function is as follows. Component of the box H/ACA small nucleolar ribonucleoprotein (H/ACA snoRNP) complex, which catalyzes pseudouridylation of rRNA. This involves the isomerization of uridine such that the ribose is subsequently attached to C5, instead of the normal N1. Pseudouridine ('psi') residues may serve to stabilize the conformation of rRNAs. Required for ribosome biogenesis. H/ACA snoRNP complex-dependent ribosome biogenesis is important in female germline cell differentiation during oogenesis. The protein is H/ACA ribonucleoprotein complex subunit 3 of Drosophila melanogaster (Fruit fly).